An 842-amino-acid polypeptide reads, in one-letter code: MutS protein homolog him-14 (842 aa).

The segment at 1-21 (MYSNKSFQRRQRQQVAESRSE) is disordered. 588–595 (GPNMAGKS) contacts ATP.

The protein belongs to the DNA mismatch repair MutS family. Heterooligomer of him-14 and msh-5.

The protein resides in the nucleus. Its function is as follows. Required during the pachytene stage of meiotic prophase for the formation of crossovers between homologous chromosomes. Together with msh-5 and zhp-3 plays a role in the activation of DNA damage-dependent apoptosis at the DNA damage checkpoint in pachytene cells. Not needed for pairing or synapsis. May promote crossing over by interfering with Holliday junction branch migration. Has no apparent role in DNA mismatch repair. The chain is MutS protein homolog him-14 from Caenorhabditis elegans.